The sequence spans 362 residues: Zinc phosphodiesterase ELAC protein 1 (362 aa).

Zn(2+) contacts are provided by His62, His64, Asp66, His67, His181, Asp252, and His312. Asp66 acts as the Proton acceptor in catalysis.

Belongs to the RNase Z family. Homodimer. Requires Zn(2+) as cofactor.

Its subcellular location is the cytoplasm. It is found in the cytosol. It localises to the nucleus. It catalyses the reaction Endonucleolytic cleavage of RNA, removing extra 3' nucleotides from tRNA precursor, generating 3' termini of tRNAs. A 3'-hydroxy group is left at the tRNA terminus and a 5'-phosphoryl group is left at the trailer molecule.. Its function is as follows. Zinc phosphodiesterase, which displays some tRNA 3'-processing endonuclease activity. Specifically involved in tRNA repair: acts downstream of the ribosome-associated quality control (RQC) pathway by removing a 2',3'-cyclic phosphate from tRNAs following cleavage by ANKZF1. tRNAs are then processed by TRNT1. The chain is Zinc phosphodiesterase ELAC protein 1 (Elac1) from Mus musculus (Mouse).